The following is a 189-amino-acid chain: Elongation factor P (189 aa).

It belongs to the elongation factor P family.

The protein resides in the cytoplasm. It participates in protein biosynthesis; polypeptide chain elongation. Its function is as follows. Involved in peptide bond synthesis. Stimulates efficient translation and peptide-bond synthesis on native or reconstituted 70S ribosomes in vitro. Probably functions indirectly by altering the affinity of the ribosome for aminoacyl-tRNA, thus increasing their reactivity as acceptors for peptidyl transferase. This chain is Elongation factor P, found in Orientia tsutsugamushi (strain Ikeda) (Rickettsia tsutsugamushi).